The chain runs to 2368 residues: Voltage-dependent P/Q-type calcium channel subunit alpha-1A (2368 aa).

Topologically, residues 1–100 are cytoplasmic; sequence MARFGDEMPG…KYAKKITEWP (100 aa). The stretch at 65–365 is one I repeat; the sequence is NPIPVRQNCL…LVLGVLSGEF (301 aa). Residues 101 to 119 form a helical membrane-spanning segment; the sequence is PFEYMILATIIANCIVLAL. The Extracellular segment spans residues 120 to 138; the sequence is EQHLPDDDKTPMSERLDDT. The helical transmembrane segment at 139–156 threads the bilayer; that stretch reads EPYFIGIFCFEAGIKIVA. Over 157–168 the chain is Cytoplasmic; it reads LGFAFHKGSYLR. A helical membrane pass occupies residues 169-184; it reads NGWNVMDFVVVLTGIL. The Extracellular segment spans residues 185-192; the sequence is ATVGTEFD. Residues 193-211 form a helical membrane-spanning segment; it reads LRTLRAVRVLRPLKLVSGI. At 212-230 the chain is on the cytoplasmic side; sequence PSLQVVLKSIMKAMIPLLQ. A helical transmembrane segment spans residues 231 to 250; it reads IGLLLFFAILIFAIIGLEFY. At 251 to 337 the chain is on the extracellular side; it reads MGKFHTTCFE…NSNDASGNTW (87 aa). An N-linked (GlcNAc...) asparagine glycan is attached at asparagine 285. Glutamate 320 contributes to the Ca(2+) binding site. Residues 338-362 traverse the membrane as a helical segment; the sequence is NWLYFIPLIIIGSFFMLNLVLGVLS. At 363–489 the chain is on the cytoplasmic side; that stretch reads GEFAKERERV…FYIRRMVKTQ (127 aa). Residues 385–402 are binding to the beta subunit; it reads QQIERELNGYMEWISKAE. A Phosphothreonine modification is found at threonine 411. Residues serine 450 and serine 453 each carry the phosphoserine modification. One copy of the II repeat lies at 475-719; sequence ERRMRFYIRR…VFLAIAVDNL (245 aa). Residues 490–509 traverse the membrane as a helical segment; that stretch reads AFYWTVLSLVALNTLCVAIV. The Extracellular portion of the chain corresponds to 510–523; it reads HYNQPEWLSDFLYY. A helical transmembrane segment spans residues 524-543; it reads AEFIFLGLFMSEMFIKMYGL. Over 544–551 the chain is Cytoplasmic; the sequence is GTRPYFHS. The chain crosses the membrane as a helical span at residues 552 to 570; the sequence is SFNCFDCGVIIGSIFEVIW. At 571–580 the chain is on the extracellular side; that stretch reads AVIKPGTSFG. A helical transmembrane segment spans residues 581-599; sequence ISVLRALRLLRIFKVTKYW. At 600-618 the chain is on the cytoplasmic side; the sequence is ASLRNLVVSLLNSMKSIIS. Residues 619 to 638 form a helical membrane-spanning segment; the sequence is LLFLLFLFIVVFALLGMQLF. Over 639 to 691 the chain is Extracellular; sequence GGQFNFDEGTPPTNFDTFPAAIMTVFQILTGEDWNEVMYDGIKSQGGVQGGMV. Glutamate 670 lines the Ca(2+) pocket. A helical transmembrane segment spans residues 692-716; that stretch reads FSIYFIVLTLFGNYTLLNVFLAIAV. Residues 717–1190 lie on the Cytoplasmic side of the membrane; it reads DNLANAQELT…TNPLRRLCHY (474 aa). Serine 752 and serine 755 each carry phosphoserine. A disordered region spans residues 762 to 781; sequence AVKEQQKNQKPTKSVWEQRT. The span at 769 to 779 shows a compositional bias: polar residues; that stretch reads NQKPTKSVWEQ. A Phosphoserine modification is found at serine 792. 2 disordered regions span residues 823 to 1117 and 1137 to 1170; these read PLVV…RKPE and VNKN…KPMP. 3 stretches are compositionally biased toward basic and acidic residues: residues 850–862, 871–924, and 932–958; these read RPRE…DARR, APGR…EGEP, and RPGD…RAAD. Phosphoserine occurs at positions 1038, 1042, and 1051. The segment covering 1056 to 1073 has biased composition (polar residues); sequence GNSTNPGPALATNPQNAA. Over residues 1074-1083 the composition is skewed to low complexity; it reads SRRTPNNPGN. The segment covering 1094-1111 has biased composition (polar residues); that stretch reads ENSLIVTNPSSTQPNSAK. Residues 1153–1163 show a composition bias toward acidic residues; that stretch reads KKEEEEADPGE. The III repeat unit spans residues 1182–1465; sequence NPLRRLCHYI…IFVALIIITF (284 aa). The helical transmembrane segment at 1191–1214 threads the bilayer; that stretch reads ILNLRYFEMCILMVIAMSSIALAA. Over 1215-1231 the chain is Extracellular; sequence EDPVQPNAPRNNVLRYF. The chain crosses the membrane as a helical span at residues 1232-1251; that stretch reads DYVFTGVFTFEMVIKMIDLG. The Cytoplasmic segment spans residues 1252–1258; the sequence is LVLHQGA. Residues 1259-1282 traverse the membrane as a helical segment; that stretch reads YFRDLWNILDFIVVSGALVAFAFT. Residues 1283–1293 lie on the Extracellular side of the membrane; that stretch reads GNSKGKDINTI. A helical transmembrane segment spans residues 1294–1311; the sequence is KSLRVLRVLRPLKTIKRL. The Cytoplasmic portion of the chain corresponds to 1312-1330; sequence PKLKAVFDCVVNSLKNVFN. A helical membrane pass occupies residues 1331–1350; sequence ILIVYMLFMFIFAVVAVQLF. At 1351–1437 the chain is on the extracellular side; sequence KGKFFHCTDE…QGPSPGYRME (87 aa). Glutamate 1411 provides a ligand contact to Ca(2+). The chain crosses the membrane as a helical span at residues 1438–1462; the sequence is MSIFYVVYFVVFPFFFVNIFVALII. Topologically, residues 1463 to 1518 are cytoplasmic; sequence ITFQEQGDKMMEEYSLEKNERACIDFAISAKPLTRHMPQNKQSFQYRMWQFVVSPP. The stretch at 1502-1765 is one IV repeat; the sequence is NKQSFQYRMW…LFVAVIMDNF (264 aa). A helical transmembrane segment spans residues 1519–1537; it reads FEYTIMAMIALNTIVLMMK. Residues 1538–1551 lie on the Extracellular side of the membrane; the sequence is FYGASVAYENALRV. Residues 1552-1573 form a helical membrane-spanning segment; that stretch reads FNIVFTSLFSLECVLKVMAFGI. The Cytoplasmic portion of the chain corresponds to 1574-1580; sequence LNYFRDA. Residues 1581 to 1600 traverse the membrane as a helical segment; it reads WNIFDFVTVLGSITDILVTE. The Extracellular segment spans residues 1601–1607; sequence FGNNFIN. Asparagine 1607 carries N-linked (GlcNAc...) asparagine glycosylation. A helical membrane pass occupies residues 1608–1626; sequence LSFLRLFRAARLIKLLRQG. The Cytoplasmic portion of the chain corresponds to 1627–1645; it reads YTIRILLWTFVQSFKALPY. Residues 1646–1665 traverse the membrane as a helical segment; the sequence is VCLLIAMLFFIYAIIGMQVF. Topologically, residues 1666-1737 are extracellular; sequence GNIGIDGEDE…ILTADCGNEF (72 aa). A helical transmembrane segment spans residues 1738 to 1763; the sequence is AYFYFVSFIFLCSFLMLNLFVAVIMD. Residues 1764–2368 are Cytoplasmic-facing; the sequence is NFEYLTRDSS…AYSESEDDWC (605 aa). Phosphothreonine is present on threonine 1935. The tract at residues 1940 to 2368 is disordered; the sequence is QRMEPPSPTQ…AYSESEDDWC (429 aa). 2 stretches are compositionally biased toward polar residues: residues 1948 to 1963 and 1981 to 1997; these read TQEG…STQL and SWVT…TGTW. 6 positions are modified to phosphoserine: serine 1998, serine 2016, serine 2028, serine 2030, serine 2071, and serine 2091. Residues 2008–2017 are compositionally biased toward polar residues; that stretch reads PNSQPNSQSV. The segment covering 2018–2034 has biased composition (basic and acidic residues); sequence EMREMGTDGYSDSEHYL. The segment covering 2063–2073 has biased composition (polar residues); the sequence is DLSTISDTSPM. Composition is skewed to basic and acidic residues over residues 2085 to 2102 and 2143 to 2153; these read RRLD…ENQR and PSKDRDQDRGR. A compositionally biased stretch (basic residues) spans 2154 to 2172; that stretch reads PKDRKHRPHHHHHHHHHHP. Positions 2173 to 2209 are enriched in basic and acidic residues; sequence PAPDRDRYAQERPDTGRARAREQRWSRSPSEGREHTT. Positions 2213-2231 are enriched in low complexity; the sequence is GSSSVSGSPAPSTSGTSTP. Basic and acidic residues predominate over residues 2289–2305; it reads EGPRPRGADYTEPDSPR.

This sequence belongs to the calcium channel alpha-1 subunit (TC 1.A.1.11) family. CACNA1A subfamily. Voltage-dependent calcium channels are multisubunit complexes, consisting of alpha-1, alpha-2, beta and delta subunits in a 1:1:1:1 ratio. The channel activity is directed by the pore-forming and voltage-sensitive alpha-1 subunit. In many cases, this subunit is sufficient to generate voltage-sensitive calcium channel activity. The auxiliary subunits beta and alpha-2/delta linked by a disulfide bridge regulate the channel activity. Interacts with CABP1. Interacts with the spider omega-agatoxin-IVA (AC P30288). Interacts with TSPOAP1. Brain specific; mainly found in the cerebellum, olfactory bulb, cerebral cortex, hippocampus, and inferior colliculus. In the hippocampus, expression occurs in pyramidal and granule neurons, as well as in interneurons. Purkinje cells contain predominantly P-type VSCC, the Q-type being a prominent calcium current in cerebellar granule cells.

It is found in the cell membrane. The catalysed reaction is Ca(2+)(in) = Ca(2+)(out). In terms of biological role, voltage-sensitive calcium channels (VSCC) mediate the entry of calcium ions into excitable cells and are also involved in a variety of calcium-dependent processes, including muscle contraction, hormone or neurotransmitter release, gene expression, cell motility, cell division and cell death. The isoform alpha-1A gives rise to P and/or Q-type calcium currents. P/Q-type calcium channels belong to the 'high-voltage activated' (HVA) group and are specifically blocked by the spider omega-agatoxin-IVA (AC P54282). They are however insensitive to dihydropyridines (DHP). In Mus musculus (Mouse), this protein is Voltage-dependent P/Q-type calcium channel subunit alpha-1A.